The primary structure comprises 279 residues: Fatty acid metabolism regulator protein (279 aa).

The HTH gntR-type domain occupies 6 to 74 (KSPAGFAEKY…HGKPTKVNQF (69 aa)). A DNA-binding region (H-T-H motif) is located at residues 34–53 (ERELSELIGVTRTTLREVLQ).

Homodimer.

It is found in the cytoplasm. Functionally, multifunctional regulator of fatty acid metabolism. This chain is Fatty acid metabolism regulator protein, found in Vibrio parahaemolyticus serotype O3:K6 (strain RIMD 2210633).